We begin with the raw amino-acid sequence, 762 residues long: uncharacterized protein (762 aa).

Positions 734 to 762 (QQRPRVAAAAPPPPPQPPAAAVPTTQAST) are disordered. A compositionally biased stretch (pro residues) spans 743 to 753 (APPPPPQPPAA).

This is an uncharacterized protein from Ostreid herpesvirus 1 (isolate France) (OsHV-1).